The primary structure comprises 173 residues: NADH-ubiquinone oxidoreductase chain 6 (173 aa).

Helical transmembrane passes span 1–21, 27–47, 53–73, 86–106, and 139–159; these read MTYI…AVAS, FAAL…VGYG, LVLF…SAAL, SVLG…GWFW, and YGGG…FVVL.

Belongs to the complex I subunit 6 family.

The protein resides in the mitochondrion membrane. It catalyses the reaction a ubiquinone + NADH + 5 H(+)(in) = a ubiquinol + NAD(+) + 4 H(+)(out). Core subunit of the mitochondrial membrane respiratory chain NADH dehydrogenase (Complex I) that is believed to belong to the minimal assembly required for catalysis. Complex I functions in the transfer of electrons from NADH to the respiratory chain. The immediate electron acceptor for the enzyme is believed to be ubiquinone. The chain is NADH-ubiquinone oxidoreductase chain 6 (MT-ND6) from Salmo salar (Atlantic salmon).